The sequence spans 506 residues: Maturase K (506 aa).

The protein belongs to the intron maturase 2 family. MatK subfamily.

The protein resides in the plastid. It is found in the chloroplast. Its function is as follows. Usually encoded in the trnK tRNA gene intron. Probably assists in splicing its own and other chloroplast group II introns. The polypeptide is Maturase K (Styphnolobium japonicum (Japanese pagoda tree)).